We begin with the raw amino-acid sequence, 486 residues long: Cardiolipin synthase A (486 aa).

The next 2 helical transmembrane spans lie at threonine 3–valine 23 and methionine 38–valine 58. PLD phosphodiesterase domains follow at residues methionine 219 to arginine 246 and glutamate 399 to serine 426. Active-site residues include histidine 224, lysine 226, aspartate 231, histidine 404, lysine 406, and aspartate 411.

The protein belongs to the phospholipase D family. Cardiolipin synthase subfamily. ClsA sub-subfamily.

Its subcellular location is the cell inner membrane. It catalyses the reaction 2 a 1,2-diacyl-sn-glycero-3-phospho-(1'-sn-glycerol) = a cardiolipin + glycerol. In terms of biological role, catalyzes the reversible phosphatidyl group transfer from one phosphatidylglycerol molecule to another to form cardiolipin (CL) (diphosphatidylglycerol) and glycerol. The polypeptide is Cardiolipin synthase A (Shigella flexneri).